Here is a 106-residue protein sequence, read N- to C-terminus: UPF0145 protein BDI_2732 (106 aa).

This sequence belongs to the UPF0145 family.

This is UPF0145 protein BDI_2732 from Parabacteroides distasonis (strain ATCC 8503 / DSM 20701 / CIP 104284 / JCM 5825 / NCTC 11152).